Reading from the N-terminus, the 275-residue chain is Rhamnulose-1-phosphate aldolase (275 aa).

E117 is a catalytic residue. Residues H141, H143, and H212 each coordinate Zn(2+).

It belongs to the aldolase class II family. RhaD subfamily. Homotetramer. The cofactor is Zn(2+).

Its subcellular location is the cytoplasm. It catalyses the reaction L-rhamnulose 1-phosphate = (S)-lactaldehyde + dihydroxyacetone phosphate. It functions in the pathway carbohydrate degradation; L-rhamnose degradation; glycerone phosphate from L-rhamnose: step 3/3. Functionally, catalyzes the reversible cleavage of L-rhamnulose-1-phosphate to dihydroxyacetone phosphate (DHAP) and L-lactaldehyde. In Salmonella dublin (strain CT_02021853), this protein is Rhamnulose-1-phosphate aldolase.